We begin with the raw amino-acid sequence, 501 residues long: Lysine--tRNA ligase (501 aa).

2 residues coordinate Mg(2+): glutamate 404 and glutamate 411.

The protein belongs to the class-II aminoacyl-tRNA synthetase family. In terms of assembly, homodimer. The cofactor is Mg(2+).

The protein resides in the cytoplasm. The catalysed reaction is tRNA(Lys) + L-lysine + ATP = L-lysyl-tRNA(Lys) + AMP + diphosphate. This is Lysine--tRNA ligase (lysS) from Campylobacter jejuni subsp. jejuni serotype O:2 (strain ATCC 700819 / NCTC 11168).